The sequence spans 704 residues: Inhibitor of carbonic anhydrase (704 aa).

Residues 1–19 (MRLAFCVLLCAGSLGLCLA) form the signal peptide. 2 Transferrin-like domains span residues 25-347 (VRWC…HLRR) and 357-689 (VMWC…NVRQ). Cystine bridges form between Cys28/Cys67, Cys38/Cys58, Cys137/Cys213, Cys172/Cys188, Cys175/Cys196, Cys185/Cys198, Cys246/Cys260, Cys360/Cys392, Cys370/Cys383, Cys417/Cys699, Cys440/Cys662, Cys472/Cys549, Cys496/Cys690, Cys506/Cys520, Cys517/Cys532, and Cys589/Cys603. Residue Asn491 is glycosylated (N-linked (GlcNAc...) asparagine).

It belongs to the transferrin family. In terms of assembly, monomer. Interacts (via transferrin-like domain 2) with CA2. In terms of processing, N-glycosylated. In terms of tissue distribution, blood plasma (at protein level).

Its subcellular location is the secreted. Its function is as follows. Inhibitor for carbonic anhydrase 2 (CA2). Does not bind iron ions. The protein is Inhibitor of carbonic anhydrase of Sus scrofa (Pig).